A 1415-amino-acid polypeptide reads, in one-letter code: Zygote defective protein 9 (1415 aa).

2 TOG regions span residues 1-250 and 251-530; these read MSNW…AKNA and PPVA…AGPA. The stretch at 21 to 48 forms a coiled coil; it reads DELRESKKWQERKEALEALLKVLTDNER. HEAT repeat units follow at residues 30-68, 95-132, 135-172, and 179-217; these read QERK…VLAK, SFAG…TMQS, TGQE…AKQP, and VVPV…VKNL. The disordered stretch occupies residues 243-278; sequence AEEQAKNAPPVAPTSSTPSASAASGDPSGGTATAVV. Positions 255 to 276 are enriched in low complexity; that stretch reads PTSSTPSASAASGDPSGGTATA. 4 HEAT repeats span residues 339–377, 381–418, 420–457, and 464–502; these read ANYG…GLRT, PFAV…TTNL, AVGE…QTMP, and LIPS…SLQL. Residues 544–603 are disordered; it reads APPAAAPPKKTAPPKKQPEDEEVVEEEDEPLKPPPGDKKKKVPVKENEENEPPVVAPKAE. Acidic residues predominate over residues 562-572; sequence EDEEVVEEEDE. A TOG 3 region spans residues 602 to 867; that stretch reads AELLLSDNED…VEERIKRTGV (266 aa). 3 HEAT repeats span residues 706 to 743, 764 to 801, and 804 to 841; these read IKVL…LKTG, VGPL…NAGI, and LKSL…FEGD. The tract at residues 867–914 is disordered; sequence VKPGSGVVTSPPTGGPKILVPQQQGSVVRRPASRSRTREPEPEEVQSD.

This sequence belongs to the TOG/XMAP215 family. In terms of assembly, interacts with tac-1 to form a heterodimer.

Its subcellular location is the cytoplasm. The protein resides in the cytoskeleton. The protein localises to the spindle pole. It localises to the microtubule organizing center. It is found in the centrosome. In terms of biological role, plays a major role in organizing microtubules and spindle poles during mitosis and meiosis in one-cell stage embryos. Required for default nucleus positioning in oocytes. In Caenorhabditis elegans, this protein is Zygote defective protein 9.